The following is a 193-amino-acid chain: Holliday junction branch migration complex subunit RuvA (193 aa).

Residues 1-64 (MIGRIAGILL…EDAHLLYGFL (64 aa)) are domain I. Residues 65–139 (TPQERTTFRE…GKLGADLGAL (75 aa)) are domain II. Positions 139–143 (LAGAA) are flexible linker. Residues 144–193 (SASDHATDILNALLALGYSEKEGLAAIKNVPAGTGVSEGIKLALKALSKA) are domain III.

Belongs to the RuvA family. As to quaternary structure, homotetramer. Forms an RuvA(8)-RuvB(12)-Holliday junction (HJ) complex. HJ DNA is sandwiched between 2 RuvA tetramers; dsDNA enters through RuvA and exits via RuvB. An RuvB hexamer assembles on each DNA strand where it exits the tetramer. Each RuvB hexamer is contacted by two RuvA subunits (via domain III) on 2 adjacent RuvB subunits; this complex drives branch migration. In the full resolvosome a probable DNA-RuvA(4)-RuvB(12)-RuvC(2) complex forms which resolves the HJ.

The protein localises to the cytoplasm. Its function is as follows. The RuvA-RuvB-RuvC complex processes Holliday junction (HJ) DNA during genetic recombination and DNA repair, while the RuvA-RuvB complex plays an important role in the rescue of blocked DNA replication forks via replication fork reversal (RFR). RuvA specifically binds to HJ cruciform DNA, conferring on it an open structure. The RuvB hexamer acts as an ATP-dependent pump, pulling dsDNA into and through the RuvAB complex. HJ branch migration allows RuvC to scan DNA until it finds its consensus sequence, where it cleaves and resolves the cruciform DNA. In Burkholderia cenocepacia (strain HI2424), this protein is Holliday junction branch migration complex subunit RuvA.